Reading from the N-terminus, the 21-residue chain is Nucleoside diphosphate kinase (21 aa).

The active-site Pros-phosphohistidine intermediate is His4.

It belongs to the NDK family. As to quaternary structure, homohexamer. It depends on Mg(2+) as a cofactor.

The protein resides in the cytoplasm. The catalysed reaction is a 2'-deoxyribonucleoside 5'-diphosphate + ATP = a 2'-deoxyribonucleoside 5'-triphosphate + ADP. It carries out the reaction a ribonucleoside 5'-diphosphate + ATP = a ribonucleoside 5'-triphosphate + ADP. In terms of biological role, major role in the synthesis of nucleoside triphosphates other than ATP. The ATP gamma phosphate is transferred to the NDP beta phosphate via a ping-pong mechanism, using a phosphorylated active-site intermediate. The chain is Nucleoside diphosphate kinase (NDK1) from Candida albicans (Yeast).